A 363-amino-acid chain; its full sequence is MCTTVTVLTDTWSRREKRFEGHAKILAIGTATPANWVDQTTYPDFYFRITNSQHLLDHKEKFRRICNKSKIRKRHMILTEELLKKNPNLCTYNDASLNTRQDILVSEVPKLGKEAAMKAIKEWGRPISEITHLVFCTTSGVDMPGADFQLTKLLGLNSSVKRLMMYQQGCNAGAAMLRLAKDVAENNKGARVLVVCSEVMLSVFRGPSLQQEDNLLAQCLFGDGSAALIVGTDPRPGLETPLFELISAAQTIIPNTDSHLKLHVREMGLTFHCSKAVPTFITQNVEDCLVKAFEPYGISDWNSIFWVLHPGGNAIVDGVEETLGLAPEKLRASRDVLSGYGNLTSACVLFILDEVRKKSKKDE.

Residue Cys-170 is part of the active site.

It belongs to the thiolase-like superfamily. Chalcone/stilbene synthases family.

It catalyses the reaction (E)-4-coumaroyl-CoA + 3 malonyl-CoA + 3 H(+) = 2',4,4',6'-tetrahydroxychalcone + 3 CO2 + 4 CoA. Its pathway is secondary metabolite biosynthesis; flavonoid biosynthesis. The primary product of this enzyme is 4,2',4',6'-tetrahydroxychalcone (also termed naringenin-chalcone or chalcone) which can under specific conditions spontaneously isomerize into naringenin. This is Chalcone synthase B (CHSB) from Ipomoea cordatotriloba (Tievine).